A 95-amino-acid polypeptide reads, in one-letter code: Aspartyl/glutamyl-tRNA(Asn/Gln) amidotransferase subunit C (95 aa).

It belongs to the GatC family. In terms of assembly, heterotrimer of A, B and C subunits.

It catalyses the reaction L-glutamyl-tRNA(Gln) + L-glutamine + ATP + H2O = L-glutaminyl-tRNA(Gln) + L-glutamate + ADP + phosphate + H(+). It carries out the reaction L-aspartyl-tRNA(Asn) + L-glutamine + ATP + H2O = L-asparaginyl-tRNA(Asn) + L-glutamate + ADP + phosphate + 2 H(+). Its function is as follows. Allows the formation of correctly charged Asn-tRNA(Asn) or Gln-tRNA(Gln) through the transamidation of misacylated Asp-tRNA(Asn) or Glu-tRNA(Gln) in organisms which lack either or both of asparaginyl-tRNA or glutaminyl-tRNA synthetases. The reaction takes place in the presence of glutamine and ATP through an activated phospho-Asp-tRNA(Asn) or phospho-Glu-tRNA(Gln). The protein is Aspartyl/glutamyl-tRNA(Asn/Gln) amidotransferase subunit C of Azoarcus sp. (strain BH72).